The chain runs to 1482 residues: Cystic fibrosis transmembrane conductance regulator (1482 aa).

At 1–77 (MQRSPLEKAS…KLINALRRCF (77 aa)) the chain is on the cytoplasmic side. The chain crosses the membrane as a helical span at residues 78 to 98 (FWRFMFYGIILYLGEVTKAVQ). Residues 81–365 (FMFYGIILYL…WAVQTWYDSL (285 aa)) enclose the ABC transmembrane type-1 1 domain. Residues 99-122 (PLLLGRIIASYDPDNKAERSIAIY) are Extracellular-facing. A helical membrane pass occupies residues 123–146 (LGVGLCLLFIVRTLLLHPAIFGPH). At 147 to 195 (HIGMQMRIAMFSLIYKKTLKLSSRVLDKISIGQLVSLLSNNLNKFDEGL) the chain is on the cytoplasmic side. A helical transmembrane segment spans residues 196–216 (ALAHFVWIAPLQVTLLMGLLW). Topologically, residues 217–222 (ELLQAS) are extracellular. The helical transmembrane segment at 223–243 (AFCGLAFLVVLALFQAGLGKM) threads the bilayer. The Cytoplasmic segment spans residues 244–298 (MMKYRDQRAGKINERLVITSEMIENIQSVKAYCWEEAMEKMIENLRQTELKLTRK). The chain crosses the membrane as a helical span at residues 299–319 (AAYVRYFNSSAFFFSGLFVVF). The Extracellular segment spans residues 320 to 339 (LSVLPYALLKGIMLRKIFTT). A helical membrane pass occupies residues 340-358 (ISFCIVLRMAVTRQFPWAV). Over 359 to 859 (QTWYDSLGAI…YLRYVTVHKS (501 aa)) the chain is Cytoplasmic. ATP-binding positions include Trp401, Ser434, 458–465 (GSTGAGKT), and Gln493. In terms of domain architecture, ABC transporter 1 spans 423 to 646 (NGDNSLFFSN…RPDFSSKLMG (224 aa)). The S-palmitoyl cysteine moiety is linked to residue Cys524. Phosphoserine is present on residues Ser549 and Ser660. The segment at 654–832 (TAERRNSIIT…EEINEEDLRE (179 aa)) is disordered R region. Ser670 carries the post-translational modification Phosphoserine; by PKA. At Ser686 the chain carries Phosphoserine. Lys688 is covalently cross-linked (Glycyl lysine isopeptide (Lys-Gly) (interchain with G-Cter in ubiquitin)). 2 positions are modified to phosphoserine: Ser700 and Ser712. The residue at position 717 (Thr717) is a Phosphothreonine. Ser737, Ser768, Ser791, Ser796, and Ser814 each carry phosphoserine. The chain crosses the membrane as a helical span at residues 860 to 880 (LIFVLIWCLVVFLAEVAACLV). Positions 860–1156 (LIFVLIWCLV…AVNSSIDVDS (297 aa)) constitute an ABC transmembrane type-1 2 domain. The Extracellular portion of the chain corresponds to 881–919 (VLCLLKKTSPQDKGNSTKGANNSYAVIITSTSAYYVFYI). Residues Asn895 and Asn901 are each glycosylated (N-linked (GlcNAc...) asparagine). Residues 920-940 (YVGVADGLLALGLFRGLPLVH) form a discontinuously helical membrane-spanning segment. The Cytoplasmic segment spans residues 941–991 (TLITVSKILHRKMLHSVLQAPMSTLNTLKAGGILNRFSKDIAVLDDLLPLT). A helical transmembrane segment spans residues 992–1012 (IFDFIQLLLIVIGAVAVVSVL). The Extracellular portion of the chain corresponds to 1013–1014 (KP). A helical transmembrane segment spans residues 1015–1035 (YIFLATVPVIVAFILLRAYFL). Topologically, residues 1036–1096 (HTSQQLKQLE…TANWFLYLST (61 aa)) are cytoplasmic. The chain crosses the membrane as a helical span at residues 1097–1117 (LRWFQMRIEMIFVIFFIAVTF). At 1118 to 1131 (ISILTTGEGEGTVG) the chain is on the extracellular side. The helical transmembrane segment at 1132–1152 (IILTLAMNIMSTLQWAVNSSI) threads the bilayer. Residues 1153-1482 (DVDSLMRSVS…TEEEVQETRL (330 aa)) lie on the Cytoplasmic side of the membrane. Residues 1212–1445 (MTVKDLTAKY…KSLFRQAISP (234 aa)) form the ABC transporter 2 domain. ATP is bound by residues Tyr1221 and 1246–1253 (GRTGSGKS). The tract at residues 1388 to 1482 (RTLKQAFADC…TEEEVQETRL (95 aa)) is interaction with GORASP2. Cys1397 is lipidated: S-palmitoyl cysteine. A compositionally biased stretch (basic residues) spans 1454 to 1464 (HRNSSKQRSRS). Residues 1454-1482 (HRNSSKQRSRSKIAALKEETEEEVQETRL) form a disordered region. Residue Ser1458 is modified to Phosphoserine. Acidic residues predominate over residues 1472-1482 (ETEEEVQETRL). The PDZ-binding signature appears at 1480-1482 (TRL).

This sequence belongs to the ABC transporter superfamily. ABCC family. CFTR transporter (TC 3.A.1.202) subfamily. As to quaternary structure, monomer; does not require oligomerization for channel activity. May form oligomers in the membrane. Interacts with SLC26A3, SLC26A6 and NHERF1. Interacts with SHANK2. Interacts with MYO6. Interacts (via C-terminus) with GOPC (via PDZ domain); this promotes CFTR internalization and thereby decreases channel activity. Interacts with SLC4A7 through NHERF1. Found in a complex with MYO5B and RAB11A. Interacts with ANO1. Interacts with SLC26A8. Interacts with AHCYL1; the interaction increases CFTR activity. Interacts with CSE1L. The core-glycosylated form interacts with GORASP2 (via PDZ GRASP-type 1 domain) in respone to ER stress. Interacts with MARCHF2; the interaction leads to CFTR ubiqtuitination and degradation. Interacts with ADGRG2. Post-translationally, N-glycosylated. In terms of processing, phosphorylated; cAMP treatment promotes phosphorylation and activates the channel. Dephosphorylation decreases the ATPase activity (in vitro). Phosphorylation at PKA sites activates the channel. Phosphorylation at PKC sites enhances the response to phosphorylation by PKA. Phosphorylated by AMPK; this inhibits channel activity. Ubiquitinated, leading to its degradation in the lysosome. Deubiquitination by USP10 in early endosomes enhances its endocytic recycling to the cell membrane. Ubiquitinated by RNF185 during ER stress. Ubiquitinated by MARCHF2.

The protein localises to the apical cell membrane. It localises to the early endosome membrane. The protein resides in the cell membrane. Its subcellular location is the recycling endosome membrane. It is found in the endoplasmic reticulum membrane. The protein localises to the nucleus. The catalysed reaction is ATP + H2O + closed Cl(-) channel = ADP + phosphate + open Cl(-) channel.. It catalyses the reaction chloride(in) = chloride(out). It carries out the reaction hydrogencarbonate(in) = hydrogencarbonate(out). The enzyme catalyses ATP + H2O = ADP + phosphate + H(+). Epithelial ion channel that plays an important role in the regulation of epithelial ion and water transport and fluid homeostasis. Mediates the transport of chloride ions across the cell membrane. Possesses an intrinsic ATPase activity and utilizes ATP to gate its channel; the passive flow of anions through the channel is gated by cycles of ATP binding and hydrolysis by the ATP-binding domains. The ion channel is also permeable to HCO(3)(-); selectivity depends on the extracellular chloride concentration. Exerts its function also by modulating the activity of other ion channels and transporters. Contributes to the regulation of the pH and the ion content of the epithelial fluid layer. Modulates the activity of the epithelial sodium channel (ENaC) complex, in part by regulating the cell surface expression of the ENaC complex. May regulate bicarbonate secretion and salvage in epithelial cells by regulating the transporter SLC4A7. Can inhibit the chloride channel activity of ANO1. Plays a role in the chloride and bicarbonate homeostasis during sperm epididymal maturation and capacitation. This Sus scrofa (Pig) protein is Cystic fibrosis transmembrane conductance regulator.